Consider the following 189-residue polypeptide: Apolipoprotein D (189 aa).

The signal sequence occupies residues 1-21; the sequence is MAPTLLLLLPALAGLISVAQG. Pyrrolidone carboxylic acid is present on Gln22. 2 disulfide bridges follow: Cys29/Cys135 and Cys62/Cys186. N-linked (GlcNAc...) asparagine glycans are attached at residues Asn66 and Asn99.

Belongs to the calycin superfamily. Lipocalin family. In terms of assembly, homodimer. Most heavily expressed in adrenal gland, lung, brain, testis and spleen.

The protein resides in the secreted. Its function is as follows. APOD occurs in the macromolecular complex with lecithin-transport and binding of bilin. Appears to be able to transport a variety of ligands in a number of different contexts. In Oryctolagus cuniculus (Rabbit), this protein is Apolipoprotein D (APOD).